We begin with the raw amino-acid sequence, 380 residues long: Cytochrome b (380 aa).

4 helical membrane passes run 34–54 (FGSL…LLAM), 78–99 (WLIR…FLHI), 114–134 (WNTG…GYVL), and 179–199 (FFAL…IHLT). Heme b contacts are provided by histidine 84 and histidine 98. Histidine 183 and histidine 197 together coordinate heme b. Histidine 202 lines the a ubiquinone pocket. The next 4 membrane-spanning stretches (helical) occupy residues 227-247 (FKDI…ALFS), 289-309 (LGGV…PFLH), 321-341 (LSQT…WIGS), and 348-368 (FIII…ILFP).

It belongs to the cytochrome b family. As to quaternary structure, the cytochrome bc1 complex contains 11 subunits: 3 respiratory subunits (MT-CYB, CYC1 and UQCRFS1), 2 core proteins (UQCRC1 and UQCRC2) and 6 low-molecular weight proteins (UQCRH/QCR6, UQCRB/QCR7, UQCRQ/QCR8, UQCR10/QCR9, UQCR11/QCR10 and a cleavage product of UQCRFS1). This cytochrome bc1 complex then forms a dimer. It depends on heme b as a cofactor.

It localises to the mitochondrion inner membrane. Its function is as follows. Component of the ubiquinol-cytochrome c reductase complex (complex III or cytochrome b-c1 complex) that is part of the mitochondrial respiratory chain. The b-c1 complex mediates electron transfer from ubiquinol to cytochrome c. Contributes to the generation of a proton gradient across the mitochondrial membrane that is then used for ATP synthesis. The chain is Cytochrome b (MT-CYB) from Gallus gallus (Chicken).